Reading from the N-terminus, the 186-residue chain is Protein YABBY 2 (186 aa).

The segment at 17-44 adopts a C4-type zinc-finger fold; sequence CNFCNTIFAVSVPSNSMLNIVTVRCGHC.

The protein belongs to the YABBY family. Expressed in leaf blades, leaf sheaths and flowers.

The protein localises to the nucleus. The polypeptide is Protein YABBY 2 (YAB2) (Oryza sativa subsp. japonica (Rice)).